Here is a 392-residue protein sequence, read N- to C-terminus: MYKRSLIAASLSVAALVSAQAMAEINGGGATLPQQLYQEPGVLTAGFAAYIGAGSGNGKAAFLNNDYTKFVAGTTNKNVHWAGSDSKLSKTNETNPYLSAHGSAWGPLIQVPSVATSVALPFNKSGSNAVNFADVNTLCGVFSGRLTDWSQIPGSGRSGAITVAYRSESSGTTELFTRFLNASCSSALEGGTFAITTSFGNSFSGGLPAGAVSAQGSQAVMNTLNAAEGRITYMSPDFAAPTLAGLDDATKVAQVRGVSPAPANVSAAIGAVTPPTTAQRSDPNNWVPVFAATASATDPSVRPYPTTGYPILGFTNLIFSQCYADATQTQQVRDFFTRHYGASVNNDTAITNHRFVPLPASWKLAVRQSFLTSTNNLYIGHSNVCNGIGRPL.

The signal sequence occupies residues 1 to 23 (MYKRSLIAASLSVAALVSAQAMA).

Belongs to the PstS family. In terms of assembly, homodimer.

The protein resides in the secreted. The protein localises to the periplasm. The enzyme catalyses a phosphate monoester + H2O = an alcohol + phosphate. In terms of biological role, has both a phosphomonoesterase and phosphodiesterase activity. The chain is Alkaline phosphatase L from Pseudomonas aeruginosa.